A 383-amino-acid chain; its full sequence is 8-amino-7-oxononanoate synthase (383 aa).

Arginine 21 lines the substrate pocket. 108-109 contributes to the pyridoxal 5'-phosphate binding site; the sequence is GF. A substrate-binding site is contributed by histidine 133. Residues serine 179, histidine 207, and threonine 233 each coordinate pyridoxal 5'-phosphate. The residue at position 236 (lysine 236) is an N6-(pyridoxal phosphate)lysine. Threonine 350 contributes to the substrate binding site.

Belongs to the class-II pyridoxal-phosphate-dependent aminotransferase family. BioF subfamily. In terms of assembly, homodimer. It depends on pyridoxal 5'-phosphate as a cofactor.

The enzyme catalyses 6-carboxyhexanoyl-[ACP] + L-alanine + H(+) = (8S)-8-amino-7-oxononanoate + holo-[ACP] + CO2. It participates in cofactor biosynthesis; biotin biosynthesis. Functionally, catalyzes the decarboxylative condensation of pimeloyl-[acyl-carrier protein] and L-alanine to produce 8-amino-7-oxononanoate (AON), [acyl-carrier protein], and carbon dioxide. This chain is 8-amino-7-oxononanoate synthase, found in Yersinia enterocolitica serotype O:8 / biotype 1B (strain NCTC 13174 / 8081).